The chain runs to 133 residues: Small ribosomal subunit protein uS11 (133 aa).

Belongs to the universal ribosomal protein uS11 family. Part of the 30S ribosomal subunit.

Functionally, located on the platform of the 30S subunit. This chain is Small ribosomal subunit protein uS11, found in Hyperthermus butylicus (strain DSM 5456 / JCM 9403 / PLM1-5).